A 341-amino-acid polypeptide reads, in one-letter code: Probable dual-specificity RNA methyltransferase RlmN (341 aa).

The active-site Proton acceptor is Glu88. The Radical SAM core domain occupies 94–314; it reads EGDRATLCIS…ESHGFTCTIR (221 aa). Cys101 and Cys325 are joined by a disulfide. Cys108, Cys112, and Cys115 together coordinate [4Fe-4S] cluster. Residues 153–154, Ser185, 206–208, and His282 each bind S-adenosyl-L-methionine; these read GE and SLH. Cys325 functions as the S-methylcysteine intermediate in the catalytic mechanism.

The protein belongs to the radical SAM superfamily. RlmN family. Requires [4Fe-4S] cluster as cofactor.

It localises to the cytoplasm. It catalyses the reaction adenosine(2503) in 23S rRNA + 2 reduced [2Fe-2S]-[ferredoxin] + 2 S-adenosyl-L-methionine = 2-methyladenosine(2503) in 23S rRNA + 5'-deoxyadenosine + L-methionine + 2 oxidized [2Fe-2S]-[ferredoxin] + S-adenosyl-L-homocysteine. The catalysed reaction is adenosine(37) in tRNA + 2 reduced [2Fe-2S]-[ferredoxin] + 2 S-adenosyl-L-methionine = 2-methyladenosine(37) in tRNA + 5'-deoxyadenosine + L-methionine + 2 oxidized [2Fe-2S]-[ferredoxin] + S-adenosyl-L-homocysteine. Specifically methylates position 2 of adenine 2503 in 23S rRNA and position 2 of adenine 37 in tRNAs. This Porphyromonas gingivalis (strain ATCC BAA-308 / W83) protein is Probable dual-specificity RNA methyltransferase RlmN.